We begin with the raw amino-acid sequence, 219 residues long: Thiamine-phosphate synthase (219 aa).

Residues 44-48 (QFREK) and Asn79 contribute to the 4-amino-2-methyl-5-(diphosphooxymethyl)pyrimidine site. Mg(2+)-binding residues include Asp80 and Asp99. Ser117 contacts 4-amino-2-methyl-5-(diphosphooxymethyl)pyrimidine. Residue 143–145 (TST) coordinates 2-[(2R,5Z)-2-carboxy-4-methylthiazol-5(2H)-ylidene]ethyl phosphate. Lys146 provides a ligand contact to 4-amino-2-methyl-5-(diphosphooxymethyl)pyrimidine. 2-[(2R,5Z)-2-carboxy-4-methylthiazol-5(2H)-ylidene]ethyl phosphate is bound by residues Gly175 and 195-196 (IS).

The protein belongs to the thiamine-phosphate synthase family. Requires Mg(2+) as cofactor.

The enzyme catalyses 2-[(2R,5Z)-2-carboxy-4-methylthiazol-5(2H)-ylidene]ethyl phosphate + 4-amino-2-methyl-5-(diphosphooxymethyl)pyrimidine + 2 H(+) = thiamine phosphate + CO2 + diphosphate. It catalyses the reaction 2-(2-carboxy-4-methylthiazol-5-yl)ethyl phosphate + 4-amino-2-methyl-5-(diphosphooxymethyl)pyrimidine + 2 H(+) = thiamine phosphate + CO2 + diphosphate. It carries out the reaction 4-methyl-5-(2-phosphooxyethyl)-thiazole + 4-amino-2-methyl-5-(diphosphooxymethyl)pyrimidine + H(+) = thiamine phosphate + diphosphate. Its pathway is cofactor biosynthesis; thiamine diphosphate biosynthesis; thiamine phosphate from 4-amino-2-methyl-5-diphosphomethylpyrimidine and 4-methyl-5-(2-phosphoethyl)-thiazole: step 1/1. In terms of biological role, condenses 4-methyl-5-(beta-hydroxyethyl)thiazole monophosphate (THZ-P) and 2-methyl-4-amino-5-hydroxymethyl pyrimidine pyrophosphate (HMP-PP) to form thiamine monophosphate (TMP). The polypeptide is Thiamine-phosphate synthase (Bacillus cereus (strain B4264)).